A 339-amino-acid chain; its full sequence is DNA-directed RNA polymerase subunit alpha (339 aa).

The segment at 1–233 is alpha N-terminal domain (alpha-NTD); that stretch reads MVREEVAGST…DLFLPFLHAE (233 aa). The alpha C-terminal domain (alpha-CTD) stretch occupies residues 264-339; sequence KKGIPLNCIF…IDLLKNKLSF (76 aa).

This sequence belongs to the RNA polymerase alpha chain family. As to quaternary structure, in plastids the minimal PEP RNA polymerase catalytic core is composed of four subunits: alpha, beta, beta', and beta''. When a (nuclear-encoded) sigma factor is associated with the core the holoenzyme is formed, which can initiate transcription.

The protein localises to the plastid. It is found in the chloroplast. The enzyme catalyses RNA(n) + a ribonucleoside 5'-triphosphate = RNA(n+1) + diphosphate. In terms of biological role, DNA-dependent RNA polymerase catalyzes the transcription of DNA into RNA using the four ribonucleoside triphosphates as substrates. In Secale strictum (Mountain rye), this protein is DNA-directed RNA polymerase subunit alpha.